We begin with the raw amino-acid sequence, 237 residues long: Lipoprotein-releasing system ATP-binding protein LolD (237 aa).

The 229-residue stretch at 8-236 folds into the ABC transporter domain; it reads ISVTDLRKTF…EAIKKSVKTA (229 aa). ATP is bound at residue 40-47; it reads GKSGSGKS.

Belongs to the ABC transporter superfamily. Lipoprotein translocase (TC 3.A.1.125) family. In terms of assembly, the complex is composed of two ATP-binding proteins (LolD) and two transmembrane proteins (LolC and LolE).

It localises to the cell inner membrane. Its function is as follows. Part of the ABC transporter complex LolCDE involved in the translocation of mature outer membrane-directed lipoproteins, from the inner membrane to the periplasmic chaperone, LolA. Responsible for the formation of the LolA-lipoprotein complex in an ATP-dependent manner. In Leptospira interrogans serogroup Icterohaemorrhagiae serovar Lai (strain 56601), this protein is Lipoprotein-releasing system ATP-binding protein LolD.